A 98-amino-acid chain; its full sequence is Small ribosomal subunit protein eS24 (98 aa).

This sequence belongs to the eukaryotic ribosomal protein eS24 family.

This is Small ribosomal subunit protein eS24 (rps2e) from Thermoplasma acidophilum (strain ATCC 25905 / DSM 1728 / JCM 9062 / NBRC 15155 / AMRC-C165).